Consider the following 96-residue polypeptide: UPF0235 protein NT01EI_0281 (96 aa).

Belongs to the UPF0235 family.

The protein is UPF0235 protein NT01EI_0281 of Edwardsiella ictaluri (strain 93-146).